Reading from the N-terminus, the 163-residue chain is NADH-quinone oxidoreductase subunit I (163 aa).

4Fe-4S ferredoxin-type domains are found at residues 54 to 84 and 94 to 123; these read LRRY…IDAE and TRYD…EGPN. The [4Fe-4S] cluster site is built by cysteine 64, cysteine 67, cysteine 70, cysteine 74, cysteine 103, cysteine 106, cysteine 109, and cysteine 113.

The protein belongs to the complex I 23 kDa subunit family. As to quaternary structure, NDH-1 is composed of at least 14 different subunits, Nqo1 to Nqo14. The complex has a L-shaped structure, with the hydrophobic arm (subunits Nqo7, Nqo8, Nqo10 to Nqo14) embedded in the inner membrane and the hydrophilic peripheral arm (subunits Nqo1 to Nqo6, Nqo9) protruding into the bacterial cytoplasm. The hydrophilic domain contains all the redox centers. NADH-quinone oxidoreductase forms a supercomplex with ubiquinol-cytochrome c reductase complex (complex III or cytochrome b-c1 complex) and cytochrome c oxidase (complex IV), which stabilizes the NADH-quinone oxidoreductase complex. [4Fe-4S] cluster is required as a cofactor.

It is found in the cell inner membrane. It catalyses the reaction a quinone + NADH + 5 H(+)(in) = a quinol + NAD(+) + 4 H(+)(out). In terms of biological role, NDH-1 shuttles electrons from NADH, via FMN and iron-sulfur (Fe-S) centers, to quinones in the respiratory chain. The immediate electron acceptor for the enzyme in this species is believed to be ubiquinone. Couples the redox reaction to proton translocation (for every two electrons transferred, four hydrogen ions are translocated across the cytoplasmic membrane), and thus conserves the redox energy in a proton gradient. The chain is NADH-quinone oxidoreductase subunit I from Paracoccus denitrificans (strain Pd 1222).